A 328-amino-acid chain; its full sequence is Nickel import system permease protein NikB (328 aa).

A run of 6 helical transmembrane segments spans residues 11–31 (LMQM…LMKL), 104–124 (LLIS…LGII), 139–159 (VIST…LLFI), 170–190 (ILSQ…AYII), 229–249 (ILPI…GTVV), and 279–299 (VLFI…LTLL). Residues 100–297 (APITLLISFS…IINTIADLLT (198 aa)) form the ABC transmembrane type-1 domain.

This sequence belongs to the binding-protein-dependent transport system permease family. OppBC subfamily. In terms of assembly, the complex is composed of two ATP-binding proteins (NikD and NikE), two transmembrane proteins (NikB and NikC) and a solute-binding protein (NikA).

It is found in the cell membrane. Its function is as follows. Part of the ABC transporter complex NikABCDE (Opp2) involved in nickel import. Probably responsible for the translocation of the substrate across the membrane. This chain is Nickel import system permease protein NikB, found in Staphylococcus aureus (strain USA300).